The sequence spans 298 residues: Protoheme IX farnesyltransferase (298 aa).

9 helical membrane-spanning segments follow: residues 16 to 36 (VVALIVFTALVGMFLAIPDMP), 45 to 65 (ALGFLGIWLAASAAAAINQLL), 93 to 113 (VFAGVLIVISMTILVVWVNVI), 114 to 134 (TAVLTFASLIGYAVIYTVYLK), 141 to 161 (IVIGGLAGATPPMLGWAAVTG), 172 to 192 (SLLVLIIFIWTPPHFWALAIF), 218 to 238 (ILVYTVLLAIVTLAPVAVGMS), 241 to 261 (FYLGGAAVLNAVFLWYAWRML), and 277 to 297 (IVYLMALFAFLMVDHLLLPWV).

This sequence belongs to the UbiA prenyltransferase family. Protoheme IX farnesyltransferase subfamily.

Its subcellular location is the cell inner membrane. The catalysed reaction is heme b + (2E,6E)-farnesyl diphosphate + H2O = Fe(II)-heme o + diphosphate. It participates in porphyrin-containing compound metabolism; heme O biosynthesis; heme O from protoheme: step 1/1. Converts heme B (protoheme IX) to heme O by substitution of the vinyl group on carbon 2 of heme B porphyrin ring with a hydroxyethyl farnesyl side group. This is Protoheme IX farnesyltransferase from Xanthomonas axonopodis pv. citri (strain 306).